The chain runs to 448 residues: Selenide, water dikinase 2 (448 aa).

Ala2 is subject to N-acetylalanine. Residue Ser46 is modified to Phosphoserine. Residue Sec60 is part of the active site. Sec60 is a non-standard amino acid (selenocysteine). ATP is bound at residue Lys63. The disordered stretch occupies residues 85 to 107 (LGRGLVGGQEEASQEAGLPAGAG). Residue Ser97 is modified to Phosphoserine. ATP contacts are provided by residues 118–120 (GMD), Asp138, Asp161, and 212–215 (GGQT). Residue Asp120 coordinates Mg(2+). Asp161 is a Mg(2+) binding site. Residue Asp316 participates in Mg(2+) binding.

It belongs to the selenophosphate synthase 1 family. Class I subfamily. Homodimer. The cofactor is Mg(2+). In terms of processing, truncated SEPHS2 proteins produced by failed UGA/Sec decoding are ubiquitinated by the CRL2(KLHDC3) complex, which recognizes the glycine (Gly) at the C-terminus of truncated SEPHS2 proteins.

It catalyses the reaction hydrogenselenide + ATP + H2O = selenophosphate + AMP + phosphate + 2 H(+). Synthesizes selenophosphate from selenide and ATP. This chain is Selenide, water dikinase 2 (SEPHS2), found in Homo sapiens (Human).